Consider the following 304-residue polypeptide: Quinolinate synthase (304 aa).

Positions 24 and 41 each coordinate iminosuccinate. Cys-86 contacts [4Fe-4S] cluster. Iminosuccinate-binding positions include 112–114 (YVN) and Ser-129. Cys-171 lines the [4Fe-4S] cluster pocket. Iminosuccinate contacts are provided by residues 197 to 199 (HPE) and Thr-214. Position 259 (Cys-259) interacts with [4Fe-4S] cluster.

It belongs to the quinolinate synthase family. Type 2 subfamily. The cofactor is [4Fe-4S] cluster.

Its subcellular location is the cytoplasm. The catalysed reaction is iminosuccinate + dihydroxyacetone phosphate = quinolinate + phosphate + 2 H2O + H(+). It functions in the pathway cofactor biosynthesis; NAD(+) biosynthesis; quinolinate from iminoaspartate: step 1/1. Functionally, catalyzes the condensation of iminoaspartate with dihydroxyacetone phosphate to form quinolinate. The sequence is that of Quinolinate synthase from Geotalea uraniireducens (strain Rf4) (Geobacter uraniireducens).